The primary structure comprises 211 residues: dITP/XTP pyrophosphatase (211 aa).

Position 7–12 (7–12 (TSNKKK)) interacts with substrate. Glu43 and Asp72 together coordinate Mg(2+). Catalysis depends on Asp72, which acts as the Proton acceptor. Residues Ser73, 169-172 (FGYD), Lys190, and 195-196 (HR) contribute to the substrate site.

Belongs to the HAM1 NTPase family. In terms of assembly, homodimer. The cofactor is Mg(2+).

The catalysed reaction is XTP + H2O = XMP + diphosphate + H(+). The enzyme catalyses dITP + H2O = dIMP + diphosphate + H(+). It carries out the reaction ITP + H2O = IMP + diphosphate + H(+). Pyrophosphatase that catalyzes the hydrolysis of nucleoside triphosphates to their monophosphate derivatives, with a high preference for the non-canonical purine nucleotides XTP (xanthosine triphosphate), dITP (deoxyinosine triphosphate) and ITP. Seems to function as a house-cleaning enzyme that removes non-canonical purine nucleotides from the nucleotide pool, thus preventing their incorporation into DNA/RNA and avoiding chromosomal lesions. This Hydrogenobaculum sp. (strain Y04AAS1) protein is dITP/XTP pyrophosphatase.